A 157-amino-acid chain; its full sequence is Ribosome maturation factor RimP (157 aa).

Belongs to the RimP family.

Its subcellular location is the cytoplasm. Functionally, required for maturation of 30S ribosomal subunits. The sequence is that of Ribosome maturation factor RimP from Ligilactobacillus salivarius (strain UCC118) (Lactobacillus salivarius).